The following is a 313-amino-acid chain: PDCD10 and GCKIII kinases-associated protein 1 (313 aa).

The segment at 42–95 is disordered; the sequence is KGTQNSEVEVPGSTLHSGSLSKPDSSGSTTGLPCQGSLTQEDSEERPCVEKHGI. Residues 58–69 are compositionally biased toward low complexity; the sequence is SGSLSKPDSSGS. Ser-60 carries the post-translational modification Phosphoserine. A compositionally biased stretch (polar residues) spans 70–81; the sequence is TTGLPCQGSLTQ. Phosphothreonine is present on Thr-104. Residues Ser-107, Ser-237, and Ser-240 each carry the phosphoserine modification. A disordered region spans residues 253-288; that stretch reads YFKEEDPTQPTPVADPGNEREDPHTYNGNKEGAVVD.

As to quaternary structure, interacts with KEAP1; this interaction prevents the ubiquitination of KEAP1 by TRIM25, thus protecting KEAP1 from degradation. Found in association with PDCD10 and members of the STE20 kinases, such as STK24, STK25, and STK26.

It is found in the cell membrane. In terms of biological role, acts as a tumor suppressor. Acts as a tumor suppressor for colorectal cancer cell proliferation by targeting KEAP1/USP17/ELK1/CDK6 axis. In Rattus norvegicus (Rat), this protein is PDCD10 and GCKIII kinases-associated protein 1.